The primary structure comprises 64 residues: Large ribosomal subunit protein bL33 (64 aa).

It belongs to the bacterial ribosomal protein bL33 family.

The chain is Large ribosomal subunit protein bL33 from Prochlorococcus marinus (strain MIT 9313).